The primary structure comprises 706 residues: Parasporal crystal protein Cry18Aa (706 aa).

It belongs to the delta endotoxin family.

Its function is as follows. Binds to the brush border membrane vesicles of scarab larvae and somehow damages the gut wall to allow the vegetative cells of P.popilliae to enter the hemolymph. Active on M.melolontha. In Paenibacillus popilliae (Bacillus popilliae), this protein is Parasporal crystal protein Cry18Aa (cry18Aa).